Reading from the N-terminus, the 461-residue chain is Histone acetyltransferase KAT5 (461 aa).

Positions 8-65 constitute a Tudor-knot domain; the sequence is IEGCRLPVLRRNQDNEDEWPLAEILSVKDISGRKLFYVHYIDFNKRLDEWVTHERLDL. An N6-acetyllysine modification is found at Lys-52. Residues 70–168 are disordered; sequence FPKKEAKTPT…RMTGSLVSDR (99 aa). Phosphoserine is present on residues Ser-86 and Ser-90. Residues 90 to 100 are compositionally biased toward basic and acidic residues; the sequence is SPEREVKRKVE. Lys-96, Lys-98, Lys-135, and Lys-137 each carry N6-acetyllysine; by autocatalysis. Residue Ser-147 is modified to Phosphoserine. One can recognise an MYST-type HAT domain in the interval 175 to 452; it reads TRMKNIECIE…IDSKCLHFTP (278 aa). The C2HC MYST-type zinc-finger motif lies at 208–233; it reads LYLCEFCLKYGRSLKCLQRHLTKCDL. N6-acetyllysine; by autocatalysis is present on Lys-275. The interval 316–461 is interaction with ATF2; that stretch reads ACILTLPPYQ…PKDWSKRGKW (146 aa). Acetyl-CoA-binding positions include 318–320 and 325–331; these read ILT and QRRGYGK. Residue Glu-351 is the Proton donor/acceptor of the active site. Positions 355 and 364 each coordinate acetyl-CoA. Residue Lys-378 forms a Glycyl lysine isopeptide (Lys-Gly) (interchain with G-Cter in SUMO1); alternate linkage. A Glycyl lysine isopeptide (Lys-Gly) (interchain with G-Cter in SUMO2); alternate cross-link involves residue Lys-378. Lys-399 is covalently cross-linked (Glycyl lysine isopeptide (Lys-Gly) (interchain with G-Cter in SUMO1)).

The protein belongs to the MYST (SAS/MOZ) family. As to quaternary structure, component of the NuA4 histone acetyltransferase complex which contains the catalytic subunit KAT5/TIP60 and the subunits EP400, TRRAP/PAF400, BRD8/SMAP, EPC1, DMAP1/DNMAP1, RUVBL1/TIP49, RUVBL2, ING3, actin, ACTL6A/BAF53A, MORF4L1/MRG15, MORF4L2/MRGX, MRGBP, YEATS4/GAS41, VPS72/YL1 and MEAF6. KAT5/TIP60, EPC1, and ING3 together constitute a minimal HAT complex termed Piccolo NuA4. The NuA4 complex interacts with MYC. Interacts with ATM. Interacts with JADE1. Interacts with PLA2G4A/CPLA2, EDNRA and HDAC7. Interacts with the cytoplasmic tail of APP and APBB1/FE65. Interacts with TRIM24 and TRIM68. Forms a complex with SENP6 and UBE2I in response to UV irradiation. Identified in a complex with HINT1. Interacts with ATF2 and CUL3. Interacts with NR1D2 (via N-terminus). Component of a SWR1-like complex. Interacts with FOXP3. Interacts with ZBTB49. Interacts with SRF. Interacts with ATF3; promoting autoacetylation and deubiquitination by USP7. Interacts with EP300/p300; interaction promotes KAT5 autoacetylation. Interacts with PRKDC; interaction is impaired following KAT5 sumoylation. Interacts with GPR50. Phosphorylated on Ser-86 and Ser-90; enhanced during G2/M phase. The phosphorylated form has a higher activity. Phosphorylation at Ser-90 by CDK1 or CDK9 is a prerequisite for phosphorylation at Ser-86 by GSK3. Phosphorylation at Ser-86 by GSK3 (GSK3A or GSK3B) activates acetyltransferase and acyltransferase activities. Phosphorylation at Ser-90 by CDK9 promotes KAT5 recruitment to chromatin. Phosphorylation by VRK1 following DNA damage promotes KAT5 association with chromatin and histone acetyltransferase activity. In terms of processing, autoacetylated. Autoacetylation is required for histone acetyltransferase activity. Autoacetylation at Lys-275 is facilitated by interaction with EP300/p300: it prevents ubiquitination and subsequent degradation by the proteasome and promotes acetylation of target proteins. Deacetylated by HDAC3 and SIRT1. Deacetylation by HDAC3 promotes its ubiquitination and cytoplasmic localization. Post-translationally, sumoylated by UBE2I at Lys-378 and Lys-399, leading to increase of its histone acetyltransferase activity in UV-induced DNA damage response, as well as its translocation to nuclear bodies. Sumoylation with SUMO2 by PIAS4 at Lys-378 promotes repair of DNA double-strand breaks (DSBs) via homologous recombination (HR). Sumoylation by PIAS4 impairs interaction with PRKDC, inhibiting non-homologous end joining (NHEJ)-mediated repair of DSBs, thereby facilitating HR. Desumoylated by SENP3. Ubiquitinated by MDM2, leading to its proteasome-dependent degradation. Ubiquitination is prevented by autoacetylation at Lys-275. Ubiquitinated following deacetylation by HDAC3, leading to cytoplasmic localization. Deubiquitinated by USP7 following interaction with ATF3, promoting its stabilization.

Its subcellular location is the nucleus. It is found in the chromosome. The protein resides in the cytoplasm. The protein localises to the centromere. It localises to the kinetochore. Its subcellular location is the cytoskeleton. It is found in the spindle pole. The protein resides in the nucleolus. The protein localises to the perinuclear region. The enzyme catalyses L-lysyl-[histone] + acetyl-CoA = N(6)-acetyl-L-lysyl-[histone] + CoA + H(+). The catalysed reaction is L-lysyl-[protein] + acetyl-CoA = N(6)-acetyl-L-lysyl-[protein] + CoA + H(+). It catalyses the reaction (2E)-butenoyl-CoA + L-lysyl-[protein] = N(6)-(2E)-butenoyl-L-lysyl-[protein] + CoA + H(+). It carries out the reaction 2-hydroxyisobutanoyl-CoA + L-lysyl-[protein] = N(6)-(2-hydroxyisobutanoyl)-L-lysyl-[protein] + CoA + H(+). The enzyme catalyses (S)-lactoyl-CoA + L-lysyl-[protein] = N(6)-[(S)-lactoyl]-L-lysyl-[protein] + CoA + H(+). Its activity is regulated as follows. Acyltransferase and acetyltransferase activities are activated by phosphorylation and autoacetylation. Autoacetylation activates the histone acetyltransferase activity. In terms of biological role, catalytic subunit of the NuA4 histone acetyltransferase complex, a multiprotein complex involved in transcriptional activation of select genes principally by acetylation of nucleosomal histones H2A and H4. Histone acetylation alters nucleosome-DNA interactions and promotes interaction of the modified histones with other proteins which positively regulate transcription. The NuA4 histone acetyltransferase complex is required for the activation of transcriptional programs associated with proto-oncogene mediated growth induction, tumor suppressor mediated growth arrest and replicative senescence, apoptosis, and DNA repair. The NuA4 complex plays a direct role in repair of DNA double-strand breaks (DSBs) by promoting homologous recombination (HR): the complex inhibits TP53BP1 binding to chromatin via MBTD1, which recognizes and binds histone H4 trimethylated at 'Lys-20' (H4K20me), and KAT5 that catalyzes acetylation of 'Lys-15' of histone H2A (H2AK15ac), thereby blocking the ubiquitination mark required for TP53BP1 localization at DNA breaks. Also involved in DSB repair by mediating acetylation of 'Lys-5' of histone H2AX (H2AXK5ac), promoting NBN/NBS1 assembly at the sites of DNA damage. The NuA4 complex plays a key role in hematopoietic stem cell maintenance and is required to maintain acetylated H2A.Z/H2AZ1 at MYC target genes. The NuA4 complex is also required for spermatid development by promoting acetylation of histones: histone hyperacetylation is required for histone replacement during the transition from round to elongating spermatids. Component of a SWR1-like complex that specifically mediates the removal of histone H2A.Z/H2AZ1 from the nucleosome. Also acetylates non-histone proteins, such as BMAL1, ATM, AURKB, CHKA, CGAS, ERCC4/XPF, LPIN1, TP53/p53, NDC80/HEC1, NR1D2, RAN, SOX4, FOXP3, SQSTM1, ULK1 and RUBCNL/Pacer. Directly acetylates and activates ATM. Promotes nucleotide excision repair (NER) by mediating acetylation of ERCC4/XPF, thereby promoting formation of the ERCC4-ERCC1 complex. Relieves NR1D2-mediated inhibition of APOC3 expression by acetylating NR1D2. Acts as a regulator of regulatory T-cells (Treg) by catalyzing FOXP3 acetylation, thereby promoting FOXP3 transcriptional repressor activity. Involved in skeletal myoblast differentiation by mediating acetylation of SOX4. Catalyzes acetylation of APBB1/FE65, increasing its transcription activator activity. Promotes transcription elongation during the activation phase of the circadian cycle by catalyzing acetylation of BMAL1, promoting elongation of circadian transcripts. Together with GSK3 (GSK3A or GSK3B), acts as a regulator of autophagy: phosphorylated at Ser-86 by GSK3 under starvation conditions, leading to activate acetyltransferase activity and promote acetylation of key autophagy regulators, such as ULK1 and RUBCNL/Pacer. Acts as a regulator of the cGAS-STING innate antiviral response by catalyzing acetylation the N-terminus of CGAS, thereby promoting CGAS DNA-binding and activation. Also regulates lipid metabolism by mediating acetylation of CHKA or LPIN1. Promotes lipolysis of lipid droplets following glucose deprivation by mediating acetylation of isoform 1 of CHKA, thereby promoting monomerization of CHKA and its conversion into a tyrosine-protein kinase. Acts as a regulator of fatty-acid-induced triacylglycerol synthesis by catalyzing acetylation of LPIN1, thereby promoting the synthesis of diacylglycerol. In addition to protein acetyltransferase, can use different acyl-CoA substrates, such as (2E)-butenoyl-CoA (crotonyl-CoA), S-lactoyl-CoA (lactyl-CoA) and 2-hydroxyisobutanoyl-CoA (2-hydroxyisobutyryl-CoA), and is able to mediate protein crotonylation, lactylation and 2-hydroxyisobutyrylation, respectively. Acts as a key regulator of chromosome segregation and kinetochore-microtubule attachment during mitosis by mediating acetylation or crotonylation of target proteins. Catalyzes acetylation of AURKB at kinetochores, increasing AURKB activity and promoting accurate chromosome segregation in mitosis. Acetylates RAN during mitosis, promoting microtubule assembly at mitotic chromosomes. Acetylates NDC80/HEC1 during mitosis, promoting robust kinetochore-microtubule attachment. Catalyzes crotonylation of MAPRE1/EB1, thereby ensuring accurate spindle positioning in mitosis. Catalyzes lactylation of NBN/NBS1 in response to DNA damage, thereby promoting DNA double-strand breaks (DSBs) via homologous recombination (HR). The sequence is that of Histone acetyltransferase KAT5 from Pongo abelii (Sumatran orangutan).